The primary structure comprises 311 residues: Malate dehydrogenase (311 aa).

NAD(+) contacts are provided by residues 7-13 and aspartate 34; that span reads GAAGGIG. Substrate is bound by residues arginine 81 and arginine 87. NAD(+)-binding positions include asparagine 94 and 117 to 119; that span reads ITN. Residues asparagine 119 and arginine 153 each coordinate substrate. The Proton acceptor role is filled by histidine 177. Methionine 227 is an NAD(+) binding site.

This sequence belongs to the LDH/MDH superfamily. MDH type 1 family. As to quaternary structure, homodimer.

The catalysed reaction is (S)-malate + NAD(+) = oxaloacetate + NADH + H(+). Functionally, catalyzes the reversible oxidation of malate to oxaloacetate. The sequence is that of Malate dehydrogenase from Shewanella putrefaciens (strain CN-32 / ATCC BAA-453).